Here is a 393-residue protein sequence, read N- to C-terminus: CAI-1 autoinducer synthase (393 aa).

Residue K240 is modified to N6-(pyridoxal phosphate)lysine.

It belongs to the class-II pyridoxal-phosphate-dependent aminotransferase family. Pyridoxal 5'-phosphate is required as a cofactor.

In terms of biological role, required for the synthesis of the quorum-sensing autoinducer CAI-1 ((S)-3-hydroxytridecan-4-one) which probably functions as an intragenus signal. In Vibrio campbellii (strain ATCC BAA-1116), this protein is CAI-1 autoinducer synthase (cqsA).